The chain runs to 386 residues: Queuine tRNA-ribosyltransferase (386 aa).

Residue aspartate 102 is the Proton acceptor of the active site. Residues 102–106 (DSGGY), aspartate 156, glutamine 203, and glycine 230 each bind substrate. Residues 261 to 267 (GVGKPDD) are RNA binding. Aspartate 280 functions as the Nucleophile in the catalytic mechanism. The RNA binding; important for wobble base 34 recognition stretch occupies residues 285–289 (TRSGR). Zn(2+)-binding residues include cysteine 318, cysteine 320, cysteine 323, and histidine 349.

This sequence belongs to the queuine tRNA-ribosyltransferase family. As to quaternary structure, homodimer. Within each dimer, one monomer is responsible for RNA recognition and catalysis, while the other monomer binds to the replacement base PreQ1. Zn(2+) is required as a cofactor.

The enzyme catalyses 7-aminomethyl-7-carbaguanine + guanosine(34) in tRNA = 7-aminomethyl-7-carbaguanosine(34) in tRNA + guanine. It functions in the pathway tRNA modification; tRNA-queuosine biosynthesis. Catalyzes the base-exchange of a guanine (G) residue with the queuine precursor 7-aminomethyl-7-deazaguanine (PreQ1) at position 34 (anticodon wobble position) in tRNAs with GU(N) anticodons (tRNA-Asp, -Asn, -His and -Tyr). Catalysis occurs through a double-displacement mechanism. The nucleophile active site attacks the C1' of nucleotide 34 to detach the guanine base from the RNA, forming a covalent enzyme-RNA intermediate. The proton acceptor active site deprotonates the incoming PreQ1, allowing a nucleophilic attack on the C1' of the ribose to form the product. After dissociation, two additional enzymatic reactions on the tRNA convert PreQ1 to queuine (Q), resulting in the hypermodified nucleoside queuosine (7-(((4,5-cis-dihydroxy-2-cyclopenten-1-yl)amino)methyl)-7-deazaguanosine). The polypeptide is Queuine tRNA-ribosyltransferase (Zymomonas mobilis subsp. mobilis (strain ATCC 31821 / ZM4 / CP4)).